A 237-amino-acid polypeptide reads, in one-letter code: Heme oxygenase (237 aa).

H17 serves as a coordination point for heme b.

Belongs to the heme oxygenase family.

Its subcellular location is the plastid. The protein resides in the chloroplast. The catalysed reaction is heme b + 3 reduced [NADPH--hemoprotein reductase] + 3 O2 = biliverdin IXalpha + CO + Fe(2+) + 3 oxidized [NADPH--hemoprotein reductase] + 3 H2O + H(+). Functionally, catalyzes the opening of the heme ring with the release of iron. Key enzyme in the synthesis of the chromophoric part of the photosynthetic antennae. In Guillardia theta (Cryptophyte), this protein is Heme oxygenase (pbsA).